The primary structure comprises 436 residues: Zinc finger protein 101 (436 aa).

Residues 4–82 form the KRAB domain; it reads VAFEDVAVNF…RKEGNEHRET (79 aa). The C2H2-type 1 zinc-finger motif lies at 102-124; that stretch reads CKCSVCGKVFLRHSFLDRHMRAH. A compositionally biased stretch (basic and acidic residues) spans 128-141; sequence KRSECGGEWRETPR. Residues 128 to 164 form a disordered region; that stretch reads KRSECGGEWRETPRKQKQHGKASISPSSGARRTVTPT. A compositionally biased stretch (polar residues) spans 151 to 163; it reads ISPSSGARRTVTP. The C2H2-type 2 zinc finger occupies 169-191; that stretch reads YECKVCGKAFNSPNLFQIHQRTH. The C2H2-type 3; degenerate zinc-finger motif lies at 197-219; sequence YKCREIVRAFTVSSFFRKHGKMH. 7 consecutive C2H2-type zinc fingers follow at residues 225 to 247, 253 to 276, 282 to 304, 310 to 332, 338 to 360, 366 to 388, and 394 to 416; these read YECKYCGKPIDYPSLFQIHVRTH, YKCKQCGKAFISAGYLRTHEIRSH, HQCQECGKKLSCSSSLHRHERTH, YECQKCAKVFRCPTSLQAHERAH, YECNKCGKTFNYPSCFRRHKKTH, YECTRCGKAFGWCSSLRRHEMTH, and FDCKQCGKVFTFSNYLRLHERTH.

The protein belongs to the krueppel C2H2-type zinc-finger protein family. As to expression, expressed in a variety of adult and fetal tissues.

The protein resides in the nucleus. May be involved in transcriptional regulation. This is Zinc finger protein 101 (ZNF101) from Homo sapiens (Human).